A 314-amino-acid polypeptide reads, in one-letter code: Nodulation protein D 2 (314 aa).

One can recognise an HTH lysR-type domain in the interval 6-63; the sequence is LDLNLLVVLDALMTERNLTAAARSINLSQPAMSAAVARLRTNFRDDLFAMAGREFIPT. Residues 23–42 constitute a DNA-binding region (H-T-H motif); it reads LTAAARSINLSQPAMSAAVA.

Belongs to the LysR transcriptional regulatory family.

NodD regulates the expression of the nodABCFE genes which encode other nodulation proteins. NodD is also a negative regulator of its own expression. Binds flavonoids as inducers. The chain is Nodulation protein D 2 (nodD2) from Rhizobium tropici.